A 100-amino-acid polypeptide reads, in one-letter code: MNSSCEKIFGVLRSPRVSEKSSRLQEISNVYVFEVSSDATKIDVKNAVERLFDVKVGVVRVLNVKGKSKSFRNRGGSRSGWRKAYVRLIDGQSIDVASSV.

Belongs to the universal ribosomal protein uL23 family. Part of the 50S ribosomal subunit. Contacts protein L29, and trigger factor when it is bound to the ribosome.

In terms of biological role, one of the early assembly proteins it binds 23S rRNA. One of the proteins that surrounds the polypeptide exit tunnel on the outside of the ribosome. Forms the main docking site for trigger factor binding to the ribosome. This is Large ribosomal subunit protein uL23 from Xylella fastidiosa (strain M23).